The primary structure comprises 197 residues: LexA repressor (197 aa).

Residues 28-47 constitute a DNA-binding region (H-T-H motif); the sequence is VREIARRFRITPRGALLHLI. Active-site for autocatalytic cleavage activity residues include S119 and K156.

It belongs to the peptidase S24 family. Homodimer.

The enzyme catalyses Hydrolysis of Ala-|-Gly bond in repressor LexA.. Functionally, represses a number of genes involved in the response to DNA damage (SOS response), including recA and lexA. In the presence of single-stranded DNA, RecA interacts with LexA causing an autocatalytic cleavage which disrupts the DNA-binding part of LexA, leading to derepression of the SOS regulon and eventually DNA repair. The sequence is that of LexA repressor from Thermotoga petrophila (strain ATCC BAA-488 / DSM 13995 / JCM 10881 / RKU-1).